Reading from the N-terminus, the 610-residue chain is Calmegin (610 aa).

The first 19 residues, 1–19 (MHFQAFWLCLGLLFISINA), serve as a signal peptide directing secretion. Residues 20–471 (EFMDDDVETE…LMAAAEGHPW (452 aa)) are Lumenal-facing. Position 128 is an N6-acetyllysine (Lys-128). A disulfide bond links Cys-151 and Cys-185. Residues 258–338 (VPPIKPPKEI…KPDDWNEDTD (81 aa)) are disordered. A compositionally biased stretch (basic and acidic residues) spans 263-284 (PPKEIEDPNDKKPEEWDERAKI). Repeat copies occupy residues 267–280 (IEDP…EWDE), 284–297 (IPDP…DWDE), 303–316 (IEDS…GWLD), 322–335 (IPDP…DWNE), 339–352 (GEWE…PACR), 356–369 (GEWK…PKYK), 370–383 (GVWR…PNYQ), and 384–397 (GIWS…PDYF). Over residues 317–332 (DEPKFIPDPNAEKPDD) the composition is skewed to basic and acidic residues. The tract at residues 317-350 (DEPKFIPDPNAEKPDDWNEDTDGEWEAPQILNPA) is interaction with PPIB. The cysteines at positions 351 and 355 are disulfide-linked. The helical transmembrane segment at 472–492 (LWLIYLVTAGVPIALITSFCW) threads the bilayer. At 493–610 (PRKVKKKHKD…SVRKRRVRKD (118 aa)) the chain is on the cytoplasmic side. Residues 521–548 (QEEKEEKAALEKPMDLEEEKKQNDGEML) are compositionally biased toward basic and acidic residues. Residues 521–610 (QEEKEEKAAL…SVRKRRVRKD (90 aa)) form a disordered region. Positions 549 to 571 (EKEEESEPEEKSEEEIEIIEGQE) are enriched in acidic residues. Residues Ser-560, Ser-576, Ser-579, Ser-581, Ser-591, Ser-594, and Ser-601 each carry the phosphoserine modification. The span at 601–610 (SVRKRRVRKD) shows a compositional bias: basic residues.

This sequence belongs to the calreticulin family. As to quaternary structure, interacts with PPIB. Interacts with ADAM2. Interacts with PDILT. As to expression, detected in testis (at protein level). Detected in testis.

The protein localises to the endoplasmic reticulum membrane. In terms of biological role, functions during spermatogenesis as a chaperone for a range of client proteins that are important for sperm adhesion onto the egg zona pellucida and for subsequent penetration of the zona pellucida. Required for normal sperm migration from the uterus into the oviduct. Required for normal male fertility. Binds calcium ions. The polypeptide is Calmegin (CLGN) (Homo sapiens (Human)).